The sequence spans 592 residues: Methylenetetrahydrofolate reductase (NADH) 1 (592 aa).

Glu-21 serves as the catalytic Proton donor/acceptor. NAD(+) is bound by residues 21–26 (EFFPPK) and 52–53 (TW). Residues 52–53 (TW), His-81, 111–113 (RGD), Tyr-153, 157–160 (HPDV), Asp-175, and Lys-182 contribute to the FAD site. Residue Asp-113 participates in substrate binding. Positions 193 and 285 each coordinate substrate.

This sequence belongs to the methylenetetrahydrofolate reductase family. Homodimer. The cofactor is FAD.

The catalysed reaction is (6S)-5-methyl-5,6,7,8-tetrahydrofolate + NAD(+) = (6R)-5,10-methylene-5,6,7,8-tetrahydrofolate + NADH + H(+). It functions in the pathway one-carbon metabolism; tetrahydrofolate interconversion. Its activity is regulated as follows. Plant MTHFRs strongly prefer NADH over NADPH. Not inhibited by methionine or S-adenosylmethionine. Its function is as follows. The probable reversibility of the MTHFR reaction in plants suggests that they can metabolize the methyl group of 5,10-methylenetetrahydrofolate to serine, sugars and starch. The chain is Methylenetetrahydrofolate reductase (NADH) 1 (MTHFR1) from Arabidopsis thaliana (Mouse-ear cress).